Reading from the N-terminus, the 578-residue chain is Protein SIA1 (578 aa).

The signal sequence occupies residues 1–28 (MFRNRRILLYARRFFLVWICFLFITSWS).

Its function is as follows. May be involved in the activation of the plasma membrane proton-ATPase by glucose. The chain is Protein SIA1 (SIA1) from Kluyveromyces lactis (strain ATCC 8585 / CBS 2359 / DSM 70799 / NBRC 1267 / NRRL Y-1140 / WM37) (Yeast).